The following is a 490-amino-acid chain: Cobyric acid synthase (490 aa).

In terms of domain architecture, GATase cobBQ-type spans Ala-252 to Leu-428. Cys-333 functions as the Nucleophile in the catalytic mechanism. Residue His-420 is part of the active site.

This sequence belongs to the CobB/CobQ family. CobQ subfamily.

Its pathway is cofactor biosynthesis; adenosylcobalamin biosynthesis. In terms of biological role, catalyzes amidations at positions B, D, E, and G on adenosylcobyrinic A,C-diamide. NH(2) groups are provided by glutamine, and one molecule of ATP is hydrogenolyzed for each amidation. This is Cobyric acid synthase from Mycolicibacterium vanbaalenii (strain DSM 7251 / JCM 13017 / BCRC 16820 / KCTC 9966 / NRRL B-24157 / PYR-1) (Mycobacterium vanbaalenii).